Reading from the N-terminus, the 269-residue chain is Ribosomal RNA small subunit methyltransferase J (269 aa).

S-adenosyl-L-methionine contacts are provided by residues 125–126 (ER) and Asp-179.

The protein belongs to the methyltransferase superfamily. RsmJ family.

Its subcellular location is the cytoplasm. The catalysed reaction is guanosine(1516) in 16S rRNA + S-adenosyl-L-methionine = N(2)-methylguanosine(1516) in 16S rRNA + S-adenosyl-L-homocysteine + H(+). In terms of biological role, specifically methylates the guanosine in position 1516 of 16S rRNA. The protein is Ribosomal RNA small subunit methyltransferase J of Pseudomonas savastanoi pv. phaseolicola (strain 1448A / Race 6) (Pseudomonas syringae pv. phaseolicola (strain 1448A / Race 6)).